A 201-amino-acid chain; its full sequence is MAIDKTKNQHRINEAIRVKEVRLVGDNVEQGVYNIQEARRIAESQDLDLVEISPNADPPVCRVTDYQKFVYQLKKKAKEQKAKSVKIVIKEIRFGPQTDDHDYNFKLKHAKEFLQEGSKVKAYVFFRGRSILFKEQGEVLLLRFANDLEDFARVEQMPILEGKRMTIMLTPKSASKKGHTPPKTQVEASKQANESAETEEE.

Residues 170-201 (TPKSASKKGHTPPKTQVEASKQANESAETEEE) form a disordered region. Polar residues predominate over residues 182 to 195 (PKTQVEASKQANES).

Belongs to the IF-3 family. Monomer.

Its subcellular location is the cytoplasm. In terms of biological role, IF-3 binds to the 30S ribosomal subunit and shifts the equilibrium between 70S ribosomes and their 50S and 30S subunits in favor of the free subunits, thus enhancing the availability of 30S subunits on which protein synthesis initiation begins. The chain is Translation initiation factor IF-3 from Porphyromonas gingivalis (strain ATCC BAA-308 / W83).